Reading from the N-terminus, the 157-residue chain is Ribosome-binding factor A (157 aa).

The interval Gln-127–Asp-157 is disordered. The span at Ala-135–Asp-157 shows a compositional bias: acidic residues.

Belongs to the RbfA family. In terms of assembly, monomer. Binds 30S ribosomal subunits, but not 50S ribosomal subunits or 70S ribosomes.

Its subcellular location is the cytoplasm. One of several proteins that assist in the late maturation steps of the functional core of the 30S ribosomal subunit. Associates with free 30S ribosomal subunits (but not with 30S subunits that are part of 70S ribosomes or polysomes). Required for efficient processing of 16S rRNA. May interact with the 5'-terminal helix region of 16S rRNA. This chain is Ribosome-binding factor A, found in Shewanella baltica (strain OS195).